The primary structure comprises 376 residues: Cyclic GMP-AMP synthase-like receptor 1 (376 aa).

Residues glutamate 77 and aspartate 79 each coordinate Mg(2+).

It belongs to the mab-21 family. It depends on Mg(2+) as a cofactor. Requires Mn(2+) as cofactor.

The enzyme catalyses UTP + ATP = 3',3'-cUAMP + 2 diphosphate. Functionally, nucleotidyltransferase that catalyzes the formation of cyclic UMP-AMP (3',3'-cUAMP) from ATP and UTP and plays a key role in innate immunity. Acts as a key sensor of double-stranded RNA (dsRNA), the presence of dsRNA in the cytoplasm being a danger signal that triggers the immune responses. Directly binds dsRNA, activating the nucleotidyltransferase activity, leading to synthesis of 3',3'-cUAMP, a second messenger that binds to and activates Sting, thereby triggering the immune response via activation of the NF-kappa-B transcription factor. The protein is Cyclic GMP-AMP synthase-like receptor 1 of Stylophora pistillata (Smooth cauliflower coral).